The sequence spans 184 residues: Zinc metalloproteinase-disintegrin-like ammodytagin (184 aa).

The region spanning 1–90 (KSAAXVTLDL…CPAKCIDNKP (90 aa)) is the Peptidase M12B domain. Residue D20 participates in Ca(2+) binding. H64 is a binding site for Zn(2+). Residue E65 is part of the active site. H68 and H74 together coordinate Zn(2+). 5 residues coordinate Ca(2+): N88, V100, N103, F105, and E107. The 27-residue stretch at 98–124 (PAVCGNYFVELTPGSQCADGVCCDQCR) folds into the Disintegrin domain. 2 disulfides stabilise this stretch: C114/C120 and C165/C177.

Belongs to the venom metalloproteinase (M12B) family. P-III subfamily. P-IIIc sub-subfamily. In terms of assembly, heterodimer; disulfide-linked. Zn(2+) is required as a cofactor. The N-terminus is blocked. Post-translationally, N-glycosylated. As to expression, expressed by the venom gland.

Its subcellular location is the secreted. With respect to regulation, inhibited by EDTA, DTT and zinc ions. Partially inhibited by L-cysteine. Not inhibited by 2-propanol or PMSF. Activity is enhanced by calcium or magnesium ions. Snake venom zinc metalloprotease that has fibrinogenolytic and hemorrhagic activities in mouse and rats. Hydrolyzes the Aalpha-chain (FGA) and more slowly the Bbeta-chain of fibrinogen (FGB), without affecting the gamma-chain. Its hemorrhagic activity results of its involvement in cleavage of basal membrane components (nidogen and fibronectin but not laminin) and depletion of fibrinogen, prothrombin (F2) and factor X (F10) in blood circulation. Also possess potent azocaseinolytic activity and cleaves insulin B-chain, hydrolyzing it at positions Gln(4)-His(5), His(10)-Leu(11) and Tyr(16)-Leu(17). The chain is Zinc metalloproteinase-disintegrin-like ammodytagin from Vipera ammodytes ammodytes (Western sand viper).